Here is a 49-residue protein sequence, read N- to C-terminus: Disintegrin ocellatin (49 aa).

Residues 1–47 enclose the Disintegrin domain; that stretch reads DCESGPCCDNCKFLKEGTICKMARGDNMHHYCNGKTCDCPRNPYKGE. 4 disulfide bridges follow: C2-C11, C7-C32, C8-C37, and C20-C39. The Cell attachment site motif lies at 24–26; it reads RGD.

It belongs to the venom metalloproteinase (M12B) family. P-II subfamily. P-IIa sub-subfamily. Monomer. In terms of tissue distribution, expressed by the venom gland.

Its subcellular location is the secreted. In terms of biological role, inhibits ADP-induced human platelet aggregation. This Echis ocellatus (Ocellated saw-scaled viper) protein is Disintegrin ocellatin.